The primary structure comprises 217 residues: Probable GTP-binding protein EngB (217 aa).

The EngB-type G domain maps to 24–207; the sequence is SQPEICFAGR…HALIESWLIP (184 aa). GTP is bound by residues 32–39, 59–63, 81–84, 148–151, and 185–188; these read GRSNAGKS, GRTQH, DLPG, TKCD, and LFSA. Mg(2+) is bound by residues Ser-39 and Thr-61.

Belongs to the TRAFAC class TrmE-Era-EngA-EngB-Septin-like GTPase superfamily. EngB GTPase family. Mg(2+) is required as a cofactor.

Necessary for normal cell division and for the maintenance of normal septation. The protein is Probable GTP-binding protein EngB of Paraburkholderia xenovorans (strain LB400).